The following is a 726-amino-acid chain: Cyclin-T1 (726 aa).

Ser-117 carries the post-translational modification Phosphoserine. The Nuclear localization signal, and interaction with Tat-TAR RNA signature appears at 253–270 (KRIWNWRACEAAKKTKAD). Ser-340 bears the Phosphoserine mark. Lys-342 is covalently cross-linked (Glycyl lysine isopeptide (Lys-Gly) (interchain with G-Cter in SUMO2)). Residues 360–385 (VDHSLPQDGSNAFISQKQNSKSVPSA) form a disordered region. Over residues 366-382 (QDGSNAFISQKQNSKSV) the composition is skewed to polar residues. Positions 384–425 (SAKVSLKEYRAKHAEELAAQKRQLENMEANVKSQYAYAAQNL) form a coiled coil. Ser-388 carries the post-translational modification Phosphoserine. The residue at position 390 (Lys-390) is an N6-acetyllysine. A Glycyl lysine isopeptide (Lys-Gly) (interchain with G-Cter in SUMO2) cross-link involves residue Lys-415. ADP-ribosylserine is present on residues Ser-416, Ser-474, and Ser-475. Residues 480–550 (IKMRIKVHAA…RPGDPKHSSQ (71 aa)) form a histidine-rich domain (HRD) region. Lys-481 participates in a covalent cross-link: Glycyl lysine isopeptide (Lys-Gly) (interchain with G-Cter in SUMO2). Lys-485 is modified (N6-(ADP-ribosyl)lysine). His-487 carries the ADP-ribosylhistidine modification. Positions 487 to 506 (HAAADKHNSVEDSVTKSREH) are enriched in basic and acidic residues. Disordered regions lie at residues 487-650 (HAAA…NGHN) and 688-726 (SDYL…PLPK). Phosphoserine is present on residues Ser-495 and Ser-499. The span at 507 to 530 (KEKHKTHPSNHHHHHNHHSHKHSH) shows a compositional bias: basic residues. Residues 527–570 (KHSHSQLPVGTGNKRPGDPKHSSQTSNLAHKTYSLSSSFSSSSS) form a required for interaction with ZMYND8 region. Residue His-530 is modified to ADP-ribosylhistidine. Ser-531, Ser-549, and Ser-552 each carry ADP-ribosylserine. His-556 is subject to ADP-ribosylhistidine. Over residues 560–570 (SLSSSFSSSSS) the composition is skewed to low complexity. ADP-ribosylserine is present on Ser-563. A phosphoserine mark is found at Ser-564 and Ser-577. Low complexity predominate over residues 594-609 (STKSSSLNFSFPSLPT). Over residues 615–630 (GHSSDTSGLSFSQPSC) the composition is skewed to polar residues. Ser-637 bears the ADP-ribosylserine mark. Residues 710 to 726 (PPPLPSEPPPPLPPLPK) show a composition bias toward pro residues.

This sequence belongs to the cyclin family. Cyclin C subfamily. As to quaternary structure, cyclin-T1 is the predominant cyclin that associates with CDK9 to form a heterodimer called P-TEFb. P-TEFb forms a complex with AFF4/AF5Q31. Component of a complex which is at least composed of HTATSF1/Tat-SF1, P-TEFb complex, RNA pol II, SUPT5H, and NCL/nucleolin. Component of the 7SK snRNP complex at least composed of P-TEFb (composed of CDK9 and CCNT1/cyclin-T1), HEXIM1, HEXIM2, BCDIN3, SART3 proteins and 7SK and U6 snRNAs. Interacts (via central region) with ZMYND8 (via N-terminus); the interaction is direct and the association appears to occur between homodimeric ZMYND8 and the activated form of the P-TEFb complex. Interacts with BRD4, targets chromatin binding. Interacts with JMJD6. Interacts with MDFIC. Interacts with HSF1. Interacts with HTATSF1. Interacts with TBX21. (Microbial infection) Interacts with the transactivation region of HIV-1, HIV-2 and SIV Tat. In terms of assembly, (Microbial infection) Interacts with human herpes virus 1 (HHV-1) transcriptional regulator ICP22. Post-translationally, ADP-ribosylation on serine residues by PARP1 in response to DNA damage disrupts the phase separation activity of CCNT1, thereby preventing activation of CDK9. Ubiquitously expressed.

The protein localises to the nucleus. In terms of biological role, regulatory subunit of the cyclin-dependent kinase pair (CDK9/cyclin-T1) complex, also called positive transcription elongation factor B (P-TEFb), which facilitates the transition from abortive to productive elongation by phosphorylating the CTD (C-terminal domain) of the large subunit of RNA polymerase II (RNA Pol II). Required to activate the protein kinase activity of CDK9: acts by mediating formation of liquid-liquid phase separation (LLPS) that enhances binding of P-TEFb to the CTD of RNA Pol II. (Microbial infection) In case of HIV or SIV infections, binds to the transactivation domain of the viral nuclear transcriptional activator, Tat, thereby increasing Tat's affinity for the transactivating response RNA element (TAR RNA). Serves as an essential cofactor for Tat, by promoting RNA Pol II activation, allowing transcription of viral genes. The protein is Cyclin-T1 (CCNT1) of Homo sapiens (Human).